A 77-amino-acid polypeptide reads, in one-letter code: Chassatide C2 (77 aa).

The N-terminal stretch at 1–24 is a signal peptide; sequence MAKFANYLMLFLLVASLVMLEAQS. The propeptide at 25-44 is removed in mature form; the sequence is SDTIKVPDLGKRLLMNRDPN. The segment at residues 45–75 is a cross-link (cyclopeptide (Gly-Asn)); that stretch reads GIPCAESCVWIPCTITALMGCSCKNNVCYNN. Disulfide bonds link Cys48–Cys65, Cys52–Cys67, and Cys57–Cys72. Residue Met63 is modified to Methionine sulfoxide; in form chassatide chaC2A. Positions 76–77 are cleaved as a propeptide — removed in mature form; sequence EL.

This sequence belongs to the cyclotide family. Bracelet subfamily. In terms of processing, this is a cyclic peptide. As to expression, expressed in fruit, pedicel and stem but not in leaf and root (at protein level).

Chassatide C2: Probably participates in a plant defense mechanism. Has no activity against bacteria up to a concentration of 80 uM. Has cytotoxic but no hemolytic activity. Its function is as follows. Chassatide C2A: Probably participates in a plant defense mechanism. Has no activity against bacteria up to a concentration of 80 uM. Has no cytotoxic and no hemolytic activity. The chain is Chassatide C2 from Chassalia chartacea (Chassalia curviflora).